A 54-amino-acid polypeptide reads, in one-letter code: Secreted virulence factor MC69 (54 aa).

Residues 1 to 16 (MKAAFVLALCASLASA) form the signal peptide. A disulfide bridge links cysteine 36 with cysteine 46.

The protein belongs to the MC69 virulence factor family.

Its subcellular location is the secreted. Functionally, secreted protein required for appressorial penetration of intact host epidermal cells and for pathogenicity. The sequence is that of Secreted virulence factor MC69 from Pyricularia oryzae (strain 70-15 / ATCC MYA-4617 / FGSC 8958) (Rice blast fungus).